We begin with the raw amino-acid sequence, 49 residues long: U1-theraphotoxin-Lp1b (49 aa).

Cystine bridges form between cysteine 4-cysteine 17, cysteine 8-cysteine 41, cysteine 22-cysteine 24, and cysteine 35-cysteine 46.

As to expression, expressed by the venom gland.

It localises to the secreted. Its function is as follows. Toxin that causes irreversible contractile paralysis into adult Aedes aegypti resulting in 100% mortality after 24 hours. This Lasiodora parahybana (Brazilian salmon pink birdeater) protein is U1-theraphotoxin-Lp1b.